Consider the following 158-residue polypeptide: 6,7-dimethyl-8-ribityllumazine synthase (158 aa).

5-amino-6-(D-ribitylamino)uracil-binding positions include Phe-23, 61 to 63 (SFE), and 85 to 87 (AVI). 90-91 (ET) provides a ligand contact to (2S)-2-hydroxy-3-oxobutyl phosphate. Catalysis depends on His-93, which acts as the Proton donor. 5-amino-6-(D-ribitylamino)uracil is bound at residue Phe-118. Position 132 (Arg-132) interacts with (2S)-2-hydroxy-3-oxobutyl phosphate.

The protein belongs to the DMRL synthase family.

It carries out the reaction (2S)-2-hydroxy-3-oxobutyl phosphate + 5-amino-6-(D-ribitylamino)uracil = 6,7-dimethyl-8-(1-D-ribityl)lumazine + phosphate + 2 H2O + H(+). It functions in the pathway cofactor biosynthesis; riboflavin biosynthesis; riboflavin from 2-hydroxy-3-oxobutyl phosphate and 5-amino-6-(D-ribitylamino)uracil: step 1/2. In terms of biological role, catalyzes the formation of 6,7-dimethyl-8-ribityllumazine by condensation of 5-amino-6-(D-ribitylamino)uracil with 3,4-dihydroxy-2-butanone 4-phosphate. This is the penultimate step in the biosynthesis of riboflavin. This is 6,7-dimethyl-8-ribityllumazine synthase from Prochlorococcus marinus (strain MIT 9312).